We begin with the raw amino-acid sequence, 411 residues long: Short chain dehydrogenase ausT (411 aa).

NADP(+) contacts are provided by Asp-105, Gln-137, Tyr-249, and Arg-253. The active-site Proton donor is Tyr-249. The active-site Proton donor is Tyr-263.

Belongs to the short-chain dehydrogenases/reductases (SDR) family.

It functions in the pathway secondary metabolite biosynthesis; terpenoid biosynthesis. Short chain dehydrogenase; part of the gene cluster that mediates the biosynthesis of calidodehydroaustin, a fungal meroterpenoid. The first step of the pathway is the synthesis of 3,5-dimethylorsellinic acid by the polyketide synthase ausA. 3,5-dimethylorsellinic acid is then prenylated by the polyprenyl transferase ausN. Further epoxidation by the FAD-dependent monooxygenase ausM and cyclization by the probable terpene cyclase ausL lead to the formation of protoaustinoid A. Protoaustinoid A is then oxidized to spiro-lactone preaustinoid A3 by the combined action of the FAD-binding monooxygenases ausB and ausC, and the dioxygenase ausE. Acid-catalyzed keto-rearrangement and ring contraction of the tetraketide portion of preaustinoid A3 by ausJ lead to the formation of preaustinoid A4. The aldo-keto reductase ausK, with the help of ausH, is involved in the next step by transforming preaustinoid A4 into isoaustinone which is in turn hydroxylated by the P450 monooxygenase ausI to form austinolide. The cytochrome P450 monooxygenase ausG modifies austinolide to austinol. Austinol is further acetylated to austin by the O-acetyltransferase ausP, which spontaneously changes to dehydroaustin. The cytochrome P450 monooxygenase ausR then converts dehydroaustin is into 7-dehydrodehydroaustin. The hydroxylation catalyzed by ausR permits the O-acetyltransferase ausQ to add an additional acetyl group to the molecule, leading to the formation of acetoxydehydroaustin. The short chain dehydrogenase ausT catalyzes the reduction of the double bond present between carbon atoms 1 and 2 to convert 7-dehydrodehydroaustin into 1,2-dihydro-7-hydroxydehydroaustin. AusQ catalyzes not only an acetylation reaction but also the addition of the PKS ausV diketide product to 1,2-dihydro-7-hydroxydehydroaustin, forming precalidodehydroaustin. Finally, the iron/alpha-ketoglutarate-dependent dioxygenase converts precalidodehydroaustin into calidodehydroaustin. This chain is Short chain dehydrogenase ausT, found in Aspergillus calidoustus.